Reading from the N-terminus, the 170-residue chain is Crossover junction endodeoxyribonuclease RuvC (170 aa).

Residues Asp9, Glu70, and Asp145 contribute to the active site. Mg(2+) is bound by residues Asp9, Glu70, and Asp145.

Belongs to the RuvC family. As to quaternary structure, homodimer which binds Holliday junction (HJ) DNA. The HJ becomes 2-fold symmetrical on binding to RuvC with unstacked arms; it has a different conformation from HJ DNA in complex with RuvA. In the full resolvosome a probable DNA-RuvA(4)-RuvB(12)-RuvC(2) complex forms which resolves the HJ. It depends on Mg(2+) as a cofactor.

The protein resides in the cytoplasm. It carries out the reaction Endonucleolytic cleavage at a junction such as a reciprocal single-stranded crossover between two homologous DNA duplexes (Holliday junction).. The RuvA-RuvB-RuvC complex processes Holliday junction (HJ) DNA during genetic recombination and DNA repair. Endonuclease that resolves HJ intermediates. Cleaves cruciform DNA by making single-stranded nicks across the HJ at symmetrical positions within the homologous arms, yielding a 5'-phosphate and a 3'-hydroxyl group; requires a central core of homology in the junction. The consensus cleavage sequence is 5'-(A/T)TT(C/G)-3'. Cleavage occurs on the 3'-side of the TT dinucleotide at the point of strand exchange. HJ branch migration catalyzed by RuvA-RuvB allows RuvC to scan DNA until it finds its consensus sequence, where it cleaves and resolves the cruciform DNA. The protein is Crossover junction endodeoxyribonuclease RuvC of Chlamydia trachomatis serovar L2 (strain ATCC VR-902B / DSM 19102 / 434/Bu).